The sequence spans 486 residues: Cardiolipin synthase A (486 aa).

The next 2 membrane-spanning stretches (helical) occupy residues 3-23 (IFYDLIKWLVVLIYWLLIANI) and 38-58 (MSWLLTIYIIPFIGIAIWFFF). 2 PLD phosphodiesterase domains span residues 219 to 246 (LDVRQHRKIILIDNYISYSGSMNLVDPY) and 399 to 426 (KKGLLHSKSILIDQQLSLIGTVNLDMRS). Catalysis depends on residues histidine 224, lysine 226, aspartate 231, histidine 404, lysine 406, and aspartate 411.

The protein belongs to the phospholipase D family. Cardiolipin synthase subfamily. ClsA sub-subfamily.

The protein resides in the cell inner membrane. The enzyme catalyses 2 a 1,2-diacyl-sn-glycero-3-phospho-(1'-sn-glycerol) = a cardiolipin + glycerol. Functionally, catalyzes the reversible phosphatidyl group transfer from one phosphatidylglycerol molecule to another to form cardiolipin (CL) (diphosphatidylglycerol) and glycerol. This Buchnera aphidicola subsp. Schizaphis graminum (strain Sg) protein is Cardiolipin synthase A.